Consider the following 352-residue polypeptide: Fe(3+) ions import ATP-binding protein FbpC (352 aa).

The region spanning 5–239 is the ABC transporter domain; the sequence is LHIGHLSKSF…PADLDAALFI (235 aa). 37-44 is a binding site for ATP; that stretch reads GASGCGKT.

The protein belongs to the ABC transporter superfamily. Fe(3+) ion importer (TC 3.A.1.10) family. As to quaternary structure, the complex is composed of two ATP-binding proteins (FbpC), two transmembrane proteins (FbpB) and a solute-binding protein (FbpA).

The protein resides in the cell inner membrane. The enzyme catalyses Fe(3+)(out) + ATP + H2O = Fe(3+)(in) + ADP + phosphate + H(+). Functionally, part of the ABC transporter complex FbpABC involved in Fe(3+) ions import. Responsible for energy coupling to the transport system. The polypeptide is Fe(3+) ions import ATP-binding protein FbpC (Neisseria gonorrhoeae (strain ATCC 700825 / FA 1090)).